Here is a 199-residue protein sequence, read N- to C-terminus: dITP/XTP pyrophosphatase (199 aa).

7–12 (TTNLHK) provides a ligand contact to substrate. Mg(2+) is bound by residues Glu-41 and Asp-70. The Proton acceptor role is filled by Asp-70. Substrate contacts are provided by residues Ser-71, 154–157 (FGYD), Lys-177, and 182–183 (HR).

This sequence belongs to the HAM1 NTPase family. Homodimer. The cofactor is Mg(2+).

The catalysed reaction is XTP + H2O = XMP + diphosphate + H(+). It catalyses the reaction dITP + H2O = dIMP + diphosphate + H(+). It carries out the reaction ITP + H2O = IMP + diphosphate + H(+). Functionally, pyrophosphatase that catalyzes the hydrolysis of nucleoside triphosphates to their monophosphate derivatives, with a high preference for the non-canonical purine nucleotides XTP (xanthosine triphosphate), dITP (deoxyinosine triphosphate) and ITP. Seems to function as a house-cleaning enzyme that removes non-canonical purine nucleotides from the nucleotide pool, thus preventing their incorporation into DNA/RNA and avoiding chromosomal lesions. This is dITP/XTP pyrophosphatase from Protochlamydia amoebophila (strain UWE25).